The sequence spans 702 residues: Methionine--tRNA ligase (702 aa).

Residues 14–24 (PYANGPVHLGH) carry the 'HIGH' region motif. C146, C149, C159, and C162 together coordinate Zn(2+). The 'KMSKS' region signature appears at 344–348 (KFSKS). An ATP-binding site is contributed by K347. Residues 601–702 (EFLKVDLRVA…GKEINGKKIQ (102 aa)) form the tRNA-binding domain.

This sequence belongs to the class-I aminoacyl-tRNA synthetase family. MetG type 1 subfamily. In terms of assembly, homodimer. Zn(2+) serves as cofactor.

Its subcellular location is the cytoplasm. It carries out the reaction tRNA(Met) + L-methionine + ATP = L-methionyl-tRNA(Met) + AMP + diphosphate. Is required not only for elongation of protein synthesis but also for the initiation of all mRNA translation through initiator tRNA(fMet) aminoacylation. In Chlorobium phaeobacteroides (strain DSM 266 / SMG 266 / 2430), this protein is Methionine--tRNA ligase.